The primary structure comprises 196 residues: RNA polymerase II subunit B1 CTD phosphatase RTR2 (196 aa).

An RTR1-type zinc finger spans residues 52–123 (YLARLLSPMS…LSQTPLHERR (72 aa)). Residues Cys75, Cys80, Cys99, and His103 each coordinate Zn(2+).

It belongs to the RPAP2 family.

It is found in the cytoplasm. The protein resides in the nucleus. It carries out the reaction O-phospho-L-seryl-[protein] + H2O = L-seryl-[protein] + phosphate. It catalyses the reaction O-phospho-L-threonyl-[protein] + H2O = L-threonyl-[protein] + phosphate. In terms of biological role, probable RNA polymerase II subunit B1 C-terminal domain (CTD) phosphatase that regulates RNA polymerase II transcription. May have functional redundancy with RTR1. The chain is RNA polymerase II subunit B1 CTD phosphatase RTR2 (RTR2) from Saccharomyces cerevisiae (strain ATCC 204508 / S288c) (Baker's yeast).